Here is a 246-residue protein sequence, read N- to C-terminus: Short chain dehydrogenase/reductase dmxR12 (246 aa).

NADP(+)-binding residues include isoleucine 15, serine 34, lysine 125, and lysine 164. Catalysis depends on lysine 164, which acts as the Lowers pKa of active site Tyr.

The protein belongs to the short-chain dehydrogenases/reductases (SDR) family.

It participates in secondary metabolite biosynthesis. Short chain dehydrogenase/reductase; part of the gene cluster that mediates the biosynthesis of the dimeric xanthones cryptosporioptides. The pathway begins with the synthesis of atrochrysone thioester by the polyketide synthase dmx-nrPKS. The atrochrysone carboxyl ACP thioesterase dmxR1 then breaks the thioester bond and releases the atrochrysone carboxylic acid from dmx-nrPKS. Atrochrysone carboxylic acid is decarboxylated by the decarboxylase dmxR15, and oxidized by the anthrone oxygenase dmxR16 to yield emodin. Emodin is then reduced to emodin hydroquinone by the oxidoreductase dmxR7. A-ring reduction by the short chain dehydrogenase dmxR18, dehydration by the scytalone dehydratase-like protein dmxR17 and probable spontaneous re-oxidation, results in overall deoxygenation to chrysophanol. Baeyer-Villiger oxidation by the Baeyer-Villiger monooxygenase (BVMO) dmxR6 then yields monodictylactone in equilibrium with monodictyphenone. In the case of the cryptosporioptides biosynthesis, monodictylactone is reduced at C-12 to an alcohol (by the short chain dehydrogenases dmxR12 or dmxR8) and hydroxylated at C-5 by dmxR9, yielding the electron-rich aromatic which could eliminate H(2)O to form the ortho-quinonemethide, followed by tautomerisation to paraquinone and complete the formal reduction to produce the 10-methylgroup. Conjugate addition of C-4a-OH to the resulting paraquinone by the monooxygenase dmxR10 then gives cyclohexadienone, which is then reduced at C-5 by the short chain dehydrogenase dmxR3 to give the dihydroxanthone. The 6,7-epoxide in the cryptosporioptides could be introduced by the cytochrome P450 monooxygenase dmxL3. The highly reducing PKS dmxL2 manufactures butyrate, which is further carboxylated by dmxL1 to form ethylmalonate. It is not yet clear whether the carboxylation occurs while the butyrate is attached to the ACP of dmxL2, but this unusual fungal metabolite could then be esterified to O-5 by the O-acetyltransferase dmxR13. Finally, dimerization performed by dmxR5 gives the observed dimers cryptosporioptides A, B and C as the final products of the pathway. The protein is Short chain dehydrogenase/reductase dmxR12 of Cryptosporiopsis sp. (strain 8999).